Reading from the N-terminus, the 228-residue chain is Thrombin-like enzyme gyroxin analog (228 aa).

Positions 1–222 (VIGGDECNIN…YLDWIQSVIA (222 aa)) constitute a Peptidase S1 domain. Intrachain disulfides connect Cys-7–Cys-138, Cys-28–Cys-44, Cys-78–Cys-227, Cys-117–Cys-183, Cys-149–Cys-162, and Cys-173–Cys-198. His-43 functions as the Charge relay system in the catalytic mechanism. Asn-45 and Asn-81 each carry an N-linked (GlcNAc...) asparagine glycan. The active-site Charge relay system is Asp-88. Asn-145 carries N-linked (GlcNAc...) asparagine glycosylation. The Charge relay system role is filled by Ser-177. An N-linked (GlcNAc...) asparagine glycan is attached at Asn-224.

Belongs to the peptidase S1 family. Snake venom subfamily. In terms of assembly, monomer. Expressed by the venom gland.

The protein localises to the secreted. It carries out the reaction Selective cleavage of Arg-|-Xaa bond in fibrinogen, to form fibrin, and release fibrinopeptide A. The specificity of further degradation of fibrinogen varies with species origin of the enzyme.. Its activity is regulated as follows. Inhibited competitively by amidines and guanidines, and irreversibly inhibited by diisopropylfluorophosphate. Its function is as follows. Thrombin-like snake venom serine protease, that cleaves alpha-chain of fibrinogen (FGA) releases only fibrinopeptide A. Shows coagulant, esterase and amidase activities. Induces the barrel rotation syndrome in mice, which is manifested by gyroxin-like, rapid rolling motions. May also reversibly increase the permeability of the blood brain barrier (BBB) in mice. This chain is Thrombin-like enzyme gyroxin analog, found in Lachesis muta muta (Bushmaster).